The chain runs to 683 residues: Solute carrier family 28 member 3 (683 aa).

Positions 1–71 are disordered; the sequence is MSAFKARGVE…EEEEEGEEDQ (71 aa). Topologically, residues 1–97 are cytoplasmic; the sequence is MSAFKARGVE…FYKRNKKIIH (97 aa). Positions 60 to 71 are enriched in acidic residues; the sequence is DNEEEEEGEEDQ. The chain crosses the membrane as a helical span at residues 98 to 118; that stretch reads YTFLGLLLVGYFALVIAACIV. Topologically, residues 119 to 123 are extracellular; that stretch reads NFKQS. A helical transmembrane segment spans residues 124 to 144; it reads LALLVLTLIAIFFFFWDLFIA. Residues 145–168 lie on the Cytoplasmic side of the membrane; it reads KYGDKIAEALKPCQKFLDNHWSII. A helical membrane pass occupies residues 169–189; that stretch reads RWFVYGALLLAVILWLTLDTA. The Extracellular portion of the chain corresponds to 190 to 192; sequence KRG. The helical transmembrane segment at 193–214 threads the bilayer; sequence ANQVIPFFGLILYILLVFIFSK. Over 215–222 the chain is Cytoplasmic; it reads HPTKVRWR. A helical transmembrane segment spans residues 223-242; it reads IVIWGLLLQFIFGLIILRTK. The Extracellular segment spans residues 243–279; it reads PGLDAFNWLGIQVQTFLKYTDAGSRFLFGDDFQDHFF. The chain crosses the membrane as a helical span at residues 280-300; the sequence is AFAVLPIVIFFSTVMSMMYYL. At 301–324 the chain is on the cytoplasmic side; that stretch reads GLMQWLILKVGWLMQITMGTSPME. Positions 325-343 form an intramembrane region, helical; the sequence is SMVSAGNIFVGQTESPLLI. The Cytoplasmic segment spans residues 344–356; the sequence is RPYLADLTISEMH. A helical membrane pass occupies residues 357–379; it reads SVMSSGFATIAGSVLGAYISLGI. At 380 to 381 the chain is on the extracellular side; sequence PA. A helical membrane pass occupies residues 382 to 403; sequence AHLLTASVMSAPAALAISKTFW. Residues 404-438 are Cytoplasmic-facing; it reads PETKKSKNSTQTSIKLEKGQENNLVEAASQGASAA. The helical transmembrane segment at 439–464 threads the bilayer; the sequence is VPLVANIAANLIAFLAVLAFINATLS. The Extracellular segment spans residues 465–502; it reads WLGSMFNYPQFSFEIICSYVLMPFAFMMGVNYDDSFLV. Residues 503-522 constitute an intramembrane region (helical); sequence AELLGMKTFFNEFVAYQRLS. Over 523-561 the chain is Extracellular; it reads EYIHNRESGGPLFVDGVRQYMSVRSEAIATYALCGFANF. A helical transmembrane segment spans residues 562–572; it reads GSLGIMIGGLS. Topologically, residues 573-585 are cytoplasmic; sequence SLAPHRKSDIASC. Residues 586 to 608 traverse the membrane as a helical segment; that stretch reads GIRALIAGTIACFSTACIAGVLY. Topologically, residues 609–683 are extracellular; sequence IPELYCPNLL…GFNCSEVRPE (75 aa).

Belongs to the concentrative nucleoside transporter (CNT) (TC 2.A.41) family. In terms of assembly, homotrimer.

It localises to the cell membrane. The enzyme catalyses thymidine(out) + 2 Na(+)(out) = thymidine(in) + 2 Na(+)(in). It carries out the reaction cytidine(out) + 2 Na(+)(out) = cytidine(in) + 2 Na(+)(in). It catalyses the reaction uridine(out) + 2 Na(+)(out) = uridine(in) + 2 Na(+)(in). The catalysed reaction is adenosine(out) + 2 Na(+)(out) = adenosine(in) + 2 Na(+)(in). The enzyme catalyses guanosine(out) + 2 Na(+)(out) = guanosine(in) + 2 Na(+)(in). It carries out the reaction inosine(out) + 2 Na(+)(out) = inosine(in) + 2 Na(+)(in). Its function is as follows. Sodium-dependent, pyrimidine- and purine-selective. Involved in the homeostasis of endogenous nucleosides. Exhibits the transport characteristics of the nucleoside transport system cib or N3 subtype (N3/cib) (with marked transport of both thymidine and inosine). Employs a 2:1 sodium/nucleoside ratio. Also able to transport gemcitabine, 3'-azido-3'-deoxythymidine (AZT), ribavirin and 3-deazauridine. The chain is Solute carrier family 28 member 3 (SLC28A3) from Eptatretus stoutii (Pacific hagfish).